Reading from the N-terminus, the 150-residue chain is Large ribosomal subunit protein bL9 (150 aa).

It belongs to the bacterial ribosomal protein bL9 family.

In terms of biological role, binds to the 23S rRNA. The chain is Large ribosomal subunit protein bL9 from Polaromonas sp. (strain JS666 / ATCC BAA-500).